The chain runs to 89 residues: Small ribosomal subunit protein uS15 (89 aa).

It belongs to the universal ribosomal protein uS15 family. As to quaternary structure, part of the 30S ribosomal subunit. Forms a bridge to the 50S subunit in the 70S ribosome, contacting the 23S rRNA.

In terms of biological role, one of the primary rRNA binding proteins, it binds directly to 16S rRNA where it helps nucleate assembly of the platform of the 30S subunit by binding and bridging several RNA helices of the 16S rRNA. Forms an intersubunit bridge (bridge B4) with the 23S rRNA of the 50S subunit in the ribosome. The sequence is that of Small ribosomal subunit protein uS15 from Caulobacter sp. (strain K31).